The primary structure comprises 291 residues: Proteasome subunit beta (291 aa).

Residues 1–57 (MTWPLPDRLSINSLSGTPAVDLSSFTDFLRRQAPELLPASISGGAPLAGGDAQLPHG) constitute a propeptide, removed in mature form; by autocatalysis. The active-site Nucleophile is Thr58.

Belongs to the peptidase T1B family. The 20S proteasome core is composed of 14 alpha and 14 beta subunits that assemble into four stacked heptameric rings, resulting in a barrel-shaped structure. The two inner rings, each composed of seven catalytic beta subunits, are sandwiched by two outer rings, each composed of seven alpha subunits. The catalytic chamber with the active sites is on the inside of the barrel. Has a gated structure, the ends of the cylinder being occluded by the N-termini of the alpha-subunits. Is capped by the proteasome-associated ATPase, ARC.

The protein localises to the cytoplasm. The catalysed reaction is Cleavage of peptide bonds with very broad specificity.. It participates in protein degradation; proteasomal Pup-dependent pathway. Its activity is regulated as follows. The formation of the proteasomal ATPase ARC-20S proteasome complex, likely via the docking of the C-termini of ARC into the intersubunit pockets in the alpha-rings, may trigger opening of the gate for substrate entry. Interconversion between the open-gate and close-gate conformations leads to a dynamic regulation of the 20S proteasome proteolysis activity. In terms of biological role, component of the proteasome core, a large protease complex with broad specificity involved in protein degradation. The sequence is that of Proteasome subunit beta from Mycobacterium tuberculosis (strain ATCC 25177 / H37Ra).